A 125-amino-acid polypeptide reads, in one-letter code: Large ribosomal subunit protein bL21 (125 aa).

Belongs to the bacterial ribosomal protein bL21 family. As to quaternary structure, part of the 50S ribosomal subunit. Contacts protein L20.

In terms of biological role, this protein binds to 23S rRNA in the presence of protein L20. The sequence is that of Large ribosomal subunit protein bL21 from Synechococcus sp. (strain CC9902).